We begin with the raw amino-acid sequence, 1368 residues long: DNA-directed RNA polymerase subunit beta (1368 aa).

This sequence belongs to the RNA polymerase beta chain family. The RNAP catalytic core consists of 2 alpha, 1 beta, 1 beta' and 1 omega subunit. When a sigma factor is associated with the core the holoenzyme is formed, which can initiate transcription.

The catalysed reaction is RNA(n) + a ribonucleoside 5'-triphosphate = RNA(n+1) + diphosphate. Functionally, DNA-dependent RNA polymerase catalyzes the transcription of DNA into RNA using the four ribonucleoside triphosphates as substrates. The protein is DNA-directed RNA polymerase subunit beta of Cupriavidus taiwanensis (strain DSM 17343 / BCRC 17206 / CCUG 44338 / CIP 107171 / LMG 19424 / R1) (Ralstonia taiwanensis (strain LMG 19424)).